The sequence spans 271 residues: Formamidopyrimidine-DNA glycosylase (271 aa).

The active-site Schiff-base intermediate with DNA is P2. E3 (proton donor) is an active-site residue. The active-site Proton donor; for beta-elimination activity is the K57. Residues H90, R109, and K150 each contribute to the DNA site. The FPG-type zinc-finger motif lies at 235–269 (LVYGNKDKPCPKCGGKIESLIIGQRNSFFCPKCQK). The Proton donor; for delta-elimination activity role is filled by R259.

This sequence belongs to the FPG family. Monomer. Zn(2+) is required as a cofactor.

It carries out the reaction Hydrolysis of DNA containing ring-opened 7-methylguanine residues, releasing 2,6-diamino-4-hydroxy-5-(N-methyl)formamidopyrimidine.. It catalyses the reaction 2'-deoxyribonucleotide-(2'-deoxyribose 5'-phosphate)-2'-deoxyribonucleotide-DNA = a 3'-end 2'-deoxyribonucleotide-(2,3-dehydro-2,3-deoxyribose 5'-phosphate)-DNA + a 5'-end 5'-phospho-2'-deoxyribonucleoside-DNA + H(+). Involved in base excision repair of DNA damaged by oxidation or by mutagenic agents. Acts as a DNA glycosylase that recognizes and removes damaged bases. Has a preference for oxidized purines, such as 7,8-dihydro-8-oxoguanine (8-oxoG). Has AP (apurinic/apyrimidinic) lyase activity and introduces nicks in the DNA strand. Cleaves the DNA backbone by beta-delta elimination to generate a single-strand break at the site of the removed base with both 3'- and 5'-phosphates. This Haemophilus influenzae (strain 86-028NP) protein is Formamidopyrimidine-DNA glycosylase.